A 98-amino-acid polypeptide reads, in one-letter code: Cystatin-A (98 aa).

M1 carries the N-acetylmethionine modification. Positions 46–50 (QVVAG) match the Secondary area of contact motif.

This sequence belongs to the cystatin family. In terms of tissue distribution, expressed in the skin throughout the epidermis.

The protein resides in the cytoplasm. In terms of biological role, this is an intracellular thiol proteinase inhibitor. Has an important role in desmosome-mediated cell-cell adhesion in the lower levels of the epidermis. The chain is Cystatin-A (CSTA) from Homo sapiens (Human).